The following is a 529-amino-acid chain: Peptide chain release factor 3 (529 aa).

The tr-type G domain maps to 11 to 280; it reads AKRRTFAIIS…GLVEWAPAPM (270 aa). Residues 20–27, 88–92, and 142–145 contribute to the GTP site; these read SHPDAGKT, DTPGH, and NKLD.

It belongs to the TRAFAC class translation factor GTPase superfamily. Classic translation factor GTPase family. PrfC subfamily.

The protein localises to the cytoplasm. Functionally, increases the formation of ribosomal termination complexes and stimulates activities of RF-1 and RF-2. It binds guanine nucleotides and has strong preference for UGA stop codons. It may interact directly with the ribosome. The stimulation of RF-1 and RF-2 is significantly reduced by GTP and GDP, but not by GMP. In Salmonella arizonae (strain ATCC BAA-731 / CDC346-86 / RSK2980), this protein is Peptide chain release factor 3.